We begin with the raw amino-acid sequence, 287 residues long: ATP synthase gamma chain (287 aa).

Belongs to the ATPase gamma chain family. In terms of assembly, F-type ATPases have 2 components, CF(1) - the catalytic core - and CF(0) - the membrane proton channel. CF(1) has five subunits: alpha(3), beta(3), gamma(1), delta(1), epsilon(1). CF(0) has three main subunits: a, b and c.

The protein resides in the cell inner membrane. In terms of biological role, produces ATP from ADP in the presence of a proton gradient across the membrane. The gamma chain is believed to be important in regulating ATPase activity and the flow of protons through the CF(0) complex. This Proteus mirabilis (strain HI4320) protein is ATP synthase gamma chain.